The chain runs to 84 residues: ATP synthase subunit c (84 aa).

Transmembrane regions (helical) follow at residues I9–I29 and I54–I74.

The protein belongs to the ATPase C chain family. As to quaternary structure, F-type ATPases have 2 components, F(1) - the catalytic core - and F(0) - the membrane proton channel. F(1) has five subunits: alpha(3), beta(3), gamma(1), delta(1), epsilon(1). F(0) has three main subunits: a(1), b(2) and c(10-14). The alpha and beta chains form an alternating ring which encloses part of the gamma chain. F(1) is attached to F(0) by a central stalk formed by the gamma and epsilon chains, while a peripheral stalk is formed by the delta and b chains.

The protein resides in the cell inner membrane. Functionally, f(1)F(0) ATP synthase produces ATP from ADP in the presence of a proton or sodium gradient. F-type ATPases consist of two structural domains, F(1) containing the extramembraneous catalytic core and F(0) containing the membrane proton channel, linked together by a central stalk and a peripheral stalk. During catalysis, ATP synthesis in the catalytic domain of F(1) is coupled via a rotary mechanism of the central stalk subunits to proton translocation. Its function is as follows. Key component of the F(0) channel; it plays a direct role in translocation across the membrane. A homomeric c-ring of between 10-14 subunits forms the central stalk rotor element with the F(1) delta and epsilon subunits. The polypeptide is ATP synthase subunit c (Haemophilus ducreyi (strain 35000HP / ATCC 700724)).